Here is a 268-residue protein sequence, read N- to C-terminus: Aminoglycoside 3'-phosphotransferase (268 aa).

The active-site Proton acceptor is D188.

This sequence belongs to the aminoglycoside phosphotransferase family.

The catalysed reaction is kanamycin A + ATP = kanamycin 3'-phosphate + ADP + H(+). In terms of biological role, resistance to kanamycin and structurally-related aminoglycosides, including amikacin. In Streptomyces fradiae (Streptomyces roseoflavus), this protein is Aminoglycoside 3'-phosphotransferase (aph).